Consider the following 878-residue polypeptide: Phosphoenolpyruvate carboxylase (878 aa).

Catalysis depends on residues histidine 140 and lysine 545.

It belongs to the PEPCase type 1 family. Requires Mg(2+) as cofactor.

The catalysed reaction is oxaloacetate + phosphate = phosphoenolpyruvate + hydrogencarbonate. Functionally, forms oxaloacetate, a four-carbon dicarboxylic acid source for the tricarboxylic acid cycle. This is Phosphoenolpyruvate carboxylase from Ectopseudomonas mendocina (strain ymp) (Pseudomonas mendocina).